Here is a 204-residue protein sequence, read N- to C-terminus: Protein C (204 aa).

The disordered stretch occupies residues M1–R75. A compositionally biased stretch (basic and acidic residues) spans R10–N20. Residues S25–P34 show a composition bias toward low complexity. Polar residues predominate over residues H60–E70.

Belongs to the respirovirus protein C family.

The polypeptide is Protein C (P/V/C) (Homo sapiens (Human)).